The following is a 252-amino-acid chain: Major prion protein (252 aa).

Residues 1–22 (MANLGYWMLVLFVATWSDLGLC) form the signal peptide. The tract at residues 23 to 229 (KKRPKPGGWN…ESQAYYQRGS (207 aa)) is interaction with GRB2, ERI3 and SYN1. A disordered region spans residues 26–104 (PKPGGWNTGG…HNQWNKPSKP (79 aa)). 5 tandem repeats follow at residues 51–58 (PQGGGWGQ), 59–66 (PHGGGWGQ), 67–74 (PHGGGWGQ), 75–82 (PHGGGWGQ), and 83–90 (PHGGGWGQ). A 5 X 8 AA tandem repeats of P-H-G-G-G-W-G-Q region spans residues 51-90 (PQGGGWGQPHGGGWGQPHGGGWGQPHGGGWGQPHGGGWGQ). The segment covering 52-92 (QGGGWGQPHGGGWGQPHGGGWGQPHGGGWGQPHGGGWGQAG) has biased composition (gly residues). Positions 60, 61, 62, 68, 69, 70, 76, 77, 78, 84, 85, and 86 each coordinate Cu(2+). Residues Cys178 and Cys213 are joined by a disulfide bond. Residues Asn180 and Asn196 are each glycosylated (N-linked (GlcNAc...) asparagine). Residue Ser229 is the site of GPI-anchor amidated serine attachment. Positions 230–252 (SMVLFSSPPVILLISFLIFLIVG) are cleaved as a propeptide — removed in mature form.

It belongs to the prion family. In terms of assembly, monomer and homodimer. Has a tendency to aggregate into amyloid fibrils containing a cross-beta spine, formed by a steric zipper of superposed beta-strands. Soluble oligomers may represent an intermediate stage on the path to fibril formation. Copper binding may promote oligomerization. Interacts with GRB2, APP, ERI3/PRNPIP and SYN1. Mislocalized cytosolically exposed PrP interacts with MGRN1; this interaction alters MGRN1 subcellular location and causes lysosomal enlargement. Interacts with KIAA1191.

The protein resides in the cell membrane. It localises to the golgi apparatus. Its primary physiological function is unclear. Has cytoprotective activity against internal or environmental stresses. May play a role in neuronal development and synaptic plasticity. May be required for neuronal myelin sheath maintenance. May play a role in iron uptake and iron homeostasis. Soluble oligomers are toxic to cultured neuroblastoma cells and induce apoptosis (in vitro). Association with GPC1 (via its heparan sulfate chains) targets PRNP to lipid rafts. Also provides Cu(2+) or Zn(2+) for the ascorbate-mediated GPC1 deaminase degradation of its heparan sulfate side chains. The polypeptide is Major prion protein (PRNP) (Ateles paniscus (Black spider monkey)).